The sequence spans 310 residues: Dehydrodolichyl diphosphate synthase 2 (310 aa).

This sequence belongs to the UPP synthase family. The cofactor is Mg(2+).

It functions in the pathway protein modification; protein glycosylation. Its function is as follows. Catalyzes cis-prenyl chain elongation to produce the polyprenyl backbone of dolichol, a glycosyl carrier-lipid required for the biosynthesis of several classes of glycoprotein. This chain is Dehydrodolichyl diphosphate synthase 2, found in Arabidopsis thaliana (Mouse-ear cress).